The following is a 95-amino-acid chain: Membrane protein insertion and folding monitor (95 aa).

Residues 12 to 32 (LFLVDFFTIILPALTAIGIAF) traverse the membrane as a helical segment. The interval 86 to 89 (DEED) is crucial for elongation arrest.

The protein resides in the cell membrane. Functionally, sensor protein that up-regulates translation of the secondary membrane protein insertase (MisCB/YqjG) when activity of the primary membrane protein insertase (MisCA/SpoIIIJ) is limited. Acts as a ribosome-nascent chain complex. When the primary membrane protein insertase activity or level is reduced, the membrane insertion of MifM is impaired, which induces arrest of MifM translation and unfolding of the mRNA hairpin. Unfolding leads to translation of the downstream gene, which encodes the secondary membrane protein insertase MisCB/YqjG. Translation arrest of MifM is mediated by interaction of its C-terminal domain with the ribosomal polypeptide exit tunnel. Undergoes multisite stalling, which may allow a sufficient duration of ribosomal stalling and consequently sufficient levels of MisCB/YqjG. This is Membrane protein insertion and folding monitor (mifM) from Bacillus subtilis (strain 168).